Reading from the N-terminus, the 935-residue chain is C-1-tetrahydrofolate synthase, cytoplasmic (935 aa).

Position 1 is an N-acetylmethionine (methionine 1). Residues 2-291 (APAEILNGKE…MLMQSTVESA (290 aa)) form a methylenetetrahydrofolate dehydrogenase and methenyltetrahydrofolate cyclohydrolase (D/C) domain region. Substrate-binding positions include 52–56 (YINVK) and 99–101 (VQL). Lysine 56 is an active-site residue. NADP(+) is bound by residues 172 to 174 (GRS) and serine 197. 272-276 (PGGVG) contacts substrate. Positions 310-935 (LNLKTPVPSD…PETEQVNGLF (626 aa)) are formyltetrahydrofolate synthetase domain. Position 318 is a phosphoserine (serine 318). 380 to 387 (TPLGEGKS) is an ATP binding site. Phosphoserine occurs at positions 413 and 490.

In the N-terminal section; belongs to the tetrahydrofolate dehydrogenase/cyclohydrolase family. The protein in the C-terminal section; belongs to the formate--tetrahydrofolate ligase family. Homodimer. Ubiquitous.

The protein localises to the cytoplasm. It catalyses the reaction (6R)-5,10-methylene-5,6,7,8-tetrahydrofolate + NADP(+) = (6R)-5,10-methenyltetrahydrofolate + NADPH. It carries out the reaction (6R)-5,10-methenyltetrahydrofolate + H2O = (6R)-10-formyltetrahydrofolate + H(+). The enzyme catalyses (6S)-5,6,7,8-tetrahydrofolate + formate + ATP = (6R)-10-formyltetrahydrofolate + ADP + phosphate. It functions in the pathway one-carbon metabolism; tetrahydrofolate interconversion. Trifunctional enzyme that catalyzes the interconversion of three forms of one-carbon-substituted tetrahydrofolate: (6R)-5,10-methylene-5,6,7,8-tetrahydrofolate, 5,10-methenyltetrahydrofolate and (6S)-10-formyltetrahydrofolate. These derivatives of tetrahydrofolate are differentially required in nucleotide and amino acid biosynthesis, (6S)-10-formyltetrahydrofolate being required for purine biosynthesis while (6R)-5,10-methylene-5,6,7,8-tetrahydrofolate is used for serine and methionine biosynthesis for instance. The chain is C-1-tetrahydrofolate synthase, cytoplasmic (MTHFD1) from Homo sapiens (Human).